The primary structure comprises 199 residues: Major capsid protein (199 aa).

Disordered regions lie at residues M1–V21 and N33–L52. Basic residues-rich tracts occupy residues R7–V21 and G36–R46.

It belongs to the luteoviruses capsid protein family.

The protein resides in the virion. Functionally, major capsid protein. The protein is Major capsid protein of Avena byzantina (Oat).